The sequence spans 421 residues: Alpha-tubulin N-acetyltransferase 1 (421 aa).

One can recognise an N-acetyltransferase domain in the interval 1 to 190 (MEFPFDVDAL…NNFVIFEGFF (190 aa)). Lys-56 is modified (N6-acetyllysine; by autocatalysis). 124 to 137 (FYIHESVQRHGHGR) serves as a coordination point for acetyl-CoA. Lys-146 carries the N6-acetyllysine; by autocatalysis modification. 160–169 (SPKLLKFLNK) provides a ligand contact to acetyl-CoA. The segment at 214-235 (PIPAAPARKLPPKRAEGDIKPY) is disordered. The span at 226–235 (KRAEGDIKPY) shows a compositional bias: basic and acidic residues. N6-acetyllysine; by autocatalysis occurs at positions 233 and 244. Positions 252–284 (PLNRAPRRATPPAHPPPRSSSLGNSPDRGPLRP) are disordered. Phosphoserine occurs at positions 272 and 276. Arg-305 carries the post-translational modification Asymmetric dimethylarginine. Ser-315 carries the phosphoserine modification. Arg-323 carries the omega-N-methylarginine modification. Over residues 342–351 (FNTSFLGTGN) the composition is skewed to polar residues. The tract at residues 342-398 (FNTSFLGTGNQERKQGEQEAEDRSASEDQVLLQDGSGEEPTHTVAPRAQAPPAQSWM) is disordered. A compositionally biased stretch (basic and acidic residues) spans 352-367 (QERKQGEQEAEDRSAS).

The protein belongs to the acetyltransferase ATAT1 family. As to quaternary structure, component of the BBSome complex. Interacts with AP2 alpha-adaptins, including AP2A2, but not with AP1 gamma-adaptin (AP1G1/AP1G2); this interaction is required for efficient alpha-tubulin acetylation, hence clathrin-coated pits are sites of microtubule acetylation. In terms of processing, autoacetylation strongly increases tubulin acetylation.

It is found in the cytoplasm. It localises to the membrane. The protein resides in the clathrin-coated pit. The protein localises to the cell junction. Its subcellular location is the focal adhesion. It is found in the cell projection. It localises to the axon. The protein resides in the cytoskeleton. The protein localises to the spindle. It catalyses the reaction L-lysyl-[alpha-tubulin] + acetyl-CoA = N(6)-acetyl-L-lysyl-[alpha-tubulin] + CoA + H(+). Specifically acetylates 'Lys-40' in alpha-tubulin on the lumenal side of microtubules. Promotes microtubule destabilization and accelerates microtubule dynamics; this activity may be independent of acetylation activity. Acetylates alpha-tubulin with a slow enzymatic rate, due to a catalytic site that is not optimized for acetyl transfer. Enters the microtubule through each end and diffuses quickly throughout the lumen of microtubules. Acetylates only long/old microtubules because of its slow acetylation rate since it does not have time to act on dynamically unstable microtubules before the enzyme is released. Required for normal sperm flagellar function. Promotes directional cell locomotion and chemotaxis, through AP2A2-dependent acetylation of alpha-tubulin at clathrin-coated pits that are concentrated at the leading edge of migrating cells. May facilitate primary cilium assembly. The chain is Alpha-tubulin N-acetyltransferase 1 from Rattus norvegicus (Rat).